The following is a 254-amino-acid chain: Imidazole glycerol phosphate synthase subunit HisF (254 aa).

Catalysis depends on residues aspartate 11 and aspartate 130.

The protein belongs to the HisA/HisF family. In terms of assembly, heterodimer of HisH and HisF.

It is found in the cytoplasm. The catalysed reaction is 5-[(5-phospho-1-deoxy-D-ribulos-1-ylimino)methylamino]-1-(5-phospho-beta-D-ribosyl)imidazole-4-carboxamide + L-glutamine = D-erythro-1-(imidazol-4-yl)glycerol 3-phosphate + 5-amino-1-(5-phospho-beta-D-ribosyl)imidazole-4-carboxamide + L-glutamate + H(+). It participates in amino-acid biosynthesis; L-histidine biosynthesis; L-histidine from 5-phospho-alpha-D-ribose 1-diphosphate: step 5/9. Its function is as follows. IGPS catalyzes the conversion of PRFAR and glutamine to IGP, AICAR and glutamate. The HisF subunit catalyzes the cyclization activity that produces IGP and AICAR from PRFAR using the ammonia provided by the HisH subunit. This Microcystis aeruginosa (strain NIES-843 / IAM M-2473) protein is Imidazole glycerol phosphate synthase subunit HisF.